Consider the following 326-residue polypeptide: tRNA uridine(34) hydroxylase (326 aa).

The region spanning 123–217 is the Rhodanese domain; it reads SDPEVLLIDT…YLEEVKPEES (95 aa). Catalysis depends on cysteine 177, which acts as the Cysteine persulfide intermediate. Positions 293–326 are disordered; it reads KSRGESHIGSDVKQVIEARRQDKVERKQRQHQEG.

The protein belongs to the TrhO family.

The catalysed reaction is uridine(34) in tRNA + AH2 + O2 = 5-hydroxyuridine(34) in tRNA + A + H2O. Functionally, catalyzes oxygen-dependent 5-hydroxyuridine (ho5U) modification at position 34 in tRNAs. The sequence is that of tRNA uridine(34) hydroxylase from Shewanella loihica (strain ATCC BAA-1088 / PV-4).